The chain runs to 256 residues: Thiazole synthase (256 aa).

K95 (schiff-base intermediate with DXP) is an active-site residue. Residues G156, 183 to 184 (AG), and 205 to 206 (NT) each bind 1-deoxy-D-xylulose 5-phosphate.

This sequence belongs to the ThiG family. Homotetramer. Forms heterodimers with either ThiH or ThiS.

The protein resides in the cytoplasm. It carries out the reaction [ThiS sulfur-carrier protein]-C-terminal-Gly-aminoethanethioate + 2-iminoacetate + 1-deoxy-D-xylulose 5-phosphate = [ThiS sulfur-carrier protein]-C-terminal Gly-Gly + 2-[(2R,5Z)-2-carboxy-4-methylthiazol-5(2H)-ylidene]ethyl phosphate + 2 H2O + H(+). It functions in the pathway cofactor biosynthesis; thiamine diphosphate biosynthesis. Catalyzes the rearrangement of 1-deoxy-D-xylulose 5-phosphate (DXP) to produce the thiazole phosphate moiety of thiamine. Sulfur is provided by the thiocarboxylate moiety of the carrier protein ThiS. In vitro, sulfur can be provided by H(2)S. The sequence is that of Thiazole synthase from Gluconacetobacter diazotrophicus (strain ATCC 49037 / DSM 5601 / CCUG 37298 / CIP 103539 / LMG 7603 / PAl5).